Here is a 128-residue protein sequence, read N- to C-terminus: CD59 glycoprotein (128 aa).

The first 25 residues, M1–S25, serve as a signal peptide directing secretion. One can recognise a UPAR/Ly6 domain in the interval L26–S108. 5 disulfide bridges follow: C28/C51, C31/C38, C44/C64, C70/C88, and C89/C94. Residue N43 is glycosylated (N-linked (GlcNAc...) asparagine). The GPI-anchor amidated asparagine moiety is linked to residue N102. The propeptide at G103–P128 is removed in mature form.

Interacts with T-cell surface antigen CD2. In terms of processing, N- and O-glycosylated.

Its subcellular location is the cell membrane. It localises to the secreted. Potent inhibitor of the complement membrane attack complex (MAC) action, which protects self-cells from damage during complement activation. Acts by binding to the beta-haipins of C8 (C8A and C8B) components of the assembling MAC, forming an intermolecular beta-sheet that prevents incorporation of the multiple copies of C9 required for complete formation of the osmolytic pore. This is CD59 glycoprotein from Callithrix sp. (Marmoset).